The primary structure comprises 237 residues: Ribosomal RNA small subunit methyltransferase G (237 aa).

S-adenosyl-L-methionine is bound by residues Gly-78, Phe-83, 129–130 (AE), and Arg-148. The interval 218–237 (KKETPNKYPRKAGMPNKRPL) is disordered.

It belongs to the methyltransferase superfamily. RNA methyltransferase RsmG family.

The protein resides in the cytoplasm. Specifically methylates the N7 position of a guanine in 16S rRNA. The polypeptide is Ribosomal RNA small subunit methyltransferase G (Streptococcus sanguinis (strain SK36)).